A 163-amino-acid chain; its full sequence is Protein-export protein SecB (163 aa).

It belongs to the SecB family. In terms of assembly, homotetramer, a dimer of dimers. One homotetramer interacts with 1 SecA dimer.

It is found in the cytoplasm. One of the proteins required for the normal export of preproteins out of the cell cytoplasm. It is a molecular chaperone that binds to a subset of precursor proteins, maintaining them in a translocation-competent state. It also specifically binds to its receptor SecA. This is Protein-export protein SecB from Methylibium petroleiphilum (strain ATCC BAA-1232 / LMG 22953 / PM1).